Reading from the N-terminus, the 270-residue chain is Regulatory protein RecX (270 aa).

The protein belongs to the RecX family.

The protein resides in the cytoplasm. Functionally, modulates RecA activity. This is Regulatory protein RecX from Bacillus cereus (strain G9842).